The following is a 115-amino-acid chain: Ribosome-binding factor A (115 aa).

Belongs to the RbfA family. As to quaternary structure, monomer. Binds 30S ribosomal subunits, but not 50S ribosomal subunits or 70S ribosomes.

The protein resides in the cytoplasm. Its function is as follows. One of several proteins that assist in the late maturation steps of the functional core of the 30S ribosomal subunit. Associates with free 30S ribosomal subunits (but not with 30S subunits that are part of 70S ribosomes or polysomes). Required for efficient processing of 16S rRNA. May interact with the 5'-terminal helix region of 16S rRNA. This chain is Ribosome-binding factor A, found in Streptococcus gordonii (strain Challis / ATCC 35105 / BCRC 15272 / CH1 / DL1 / V288).